The chain runs to 377 residues: Anhydro-N-acetylmuramic acid kinase (377 aa).

12–19 (GTSLDGID) contacts ATP.

Belongs to the anhydro-N-acetylmuramic acid kinase family.

The enzyme catalyses 1,6-anhydro-N-acetyl-beta-muramate + ATP + H2O = N-acetyl-D-muramate 6-phosphate + ADP + H(+). Its pathway is amino-sugar metabolism; 1,6-anhydro-N-acetylmuramate degradation. The protein operates within cell wall biogenesis; peptidoglycan recycling. Its function is as follows. Catalyzes the specific phosphorylation of 1,6-anhydro-N-acetylmuramic acid (anhMurNAc) with the simultaneous cleavage of the 1,6-anhydro ring, generating MurNAc-6-P. Is required for the utilization of anhMurNAc either imported from the medium or derived from its own cell wall murein, and thus plays a role in cell wall recycling. The polypeptide is Anhydro-N-acetylmuramic acid kinase (Methylorubrum populi (strain ATCC BAA-705 / NCIMB 13946 / BJ001) (Methylobacterium populi)).